Here is a 186-residue protein sequence, read N- to C-terminus: Proline-rich protein 3 (186 aa).

The segment at 1–97 (MPKRKKQNQP…LGPRSSPYGR (97 aa)) is disordered. Composition is skewed to pro residues over residues 33–44 (MGPPSLLGPPPM) and 67–79 (MIPP…PPPR). Residues 153 to 181 (KSDRPVCRHFSKKGHCRYEDHCAFYHPGV) form a C3H1-type zinc finger.

This is Proline-rich protein 3 (Prr3) from Rattus norvegicus (Rat).